Consider the following 769-residue polypeptide: Dolichyl-phosphate-mannose--protein mannosyltransferase 2 (769 aa).

The disordered stretch occupies residues 1 to 44; the sequence is MSTSVEPNETEALLRKQNDLSTTASIEEKYPHQQGEAAEDDDDT. N8 carries an N-linked (GlcNAc...) asparagine glycan. A helical transmembrane segment spans residues 59–79; that stretch reads SLKQVESILAPIVFTALSFFV. N132 is a glycosylation site (N-linked (GlcNAc...) asparagine). Transmembrane regions (helical) follow at residues 152–169, 176–194, and 200–218; these read MRLF…LAYF, FSMF…ESSY, and FILL…VFCF. N-linked (GlcNAc...) asparagine glycosylation is present at N226. The next 2 membrane-spanning stretches (helical) occupy residues 252-272 and 288-308; these read VKMV…VDLW and HWFA…MLSF. The N-linked (GlcNAc...) asparagine glycan is linked to N324. Residues 342–397 enclose the MIR 1 domain; sequence PREVSMFHSVITLKNQGLSGGLLHSHVQTFPEGSKQQQVTTYGHKDSNNNWIFQRA. N-linked (GlcNAc...) asparagine glycans are attached at residues N408, N453, and N462. MIR domains lie at 412–468 and 474–534; these read IEYI…VEIM and EDKM…IENN. The next 4 helical transmembrane spans lie at 615–635, 655–675, 679–699, and 718–738; these read TTWT…YYLI, FLMG…PFAI, VTYV…FCYE, and LLYL…FWYF.

It belongs to the glycosyltransferase 39 family. In terms of assembly, PMT1 and PMT2 form a functional heterodimer.

Its subcellular location is the endoplasmic reticulum membrane. It carries out the reaction a di-trans,poly-cis-dolichyl beta-D-mannosyl phosphate + L-seryl-[protein] = 3-O-(alpha-D-mannosyl)-L-seryl-[protein] + a di-trans,poly-cis-dolichyl phosphate + H(+). It catalyses the reaction a di-trans,poly-cis-dolichyl beta-D-mannosyl phosphate + L-threonyl-[protein] = 3-O-(alpha-D-mannosyl)-L-threonyl-[protein] + a di-trans,poly-cis-dolichyl phosphate + H(+). The protein operates within protein modification; protein glycosylation. Protein mannosyltransferase (PMT) involved in hyphal growth and drug sensitivity. Transfers mannose from Dol-P-mannose to Ser or Thr residues on proteins. PMT1, PMT2 and PMT4 account for most of the protein-O-glycosylation activity, while PMT5 and PMT6 may specifically modulate a much narrower spectrum of target proteins. Essential protein that plays an important role in virulence. The sequence is that of Dolichyl-phosphate-mannose--protein mannosyltransferase 2 from Candida albicans (strain SC5314 / ATCC MYA-2876) (Yeast).